The primary structure comprises 136 residues: Psoriasis susceptibility 1 candidate gene 2 protein (136 aa).

An N-terminal signal peptide occupies residues 1 to 22; sequence MILNWKLLGILVLCLHTRGISG. Residues 20–136 are disordered; sequence ISGSEGHPSH…DLDPPREEYR (117 aa). 2 stretches are compositionally biased toward pro residues: residues 44–69 and 84–116; these read PQGP…PTRP and PEPP…PPAP. Residues 118–136 are compositionally biased toward basic and acidic residues; that stretch reads VDNRPQEEPDLDPPREEYR.

As to expression, expressed in skin. Also expressed in heart and skeletal muscle.

The protein resides in the secreted. This Homo sapiens (Human) protein is Psoriasis susceptibility 1 candidate gene 2 protein (PSORS1C2).